Consider the following 365-residue polypeptide: Aminomethyltransferase (365 aa).

This sequence belongs to the GcvT family. In terms of assembly, the glycine cleavage system is composed of four proteins: P, T, L and H.

It catalyses the reaction N(6)-[(R)-S(8)-aminomethyldihydrolipoyl]-L-lysyl-[protein] + (6S)-5,6,7,8-tetrahydrofolate = N(6)-[(R)-dihydrolipoyl]-L-lysyl-[protein] + (6R)-5,10-methylene-5,6,7,8-tetrahydrofolate + NH4(+). Its function is as follows. The glycine cleavage system catalyzes the degradation of glycine. This is Aminomethyltransferase from Cronobacter sakazakii (strain ATCC BAA-894) (Enterobacter sakazakii).